The following is a 226-amino-acid chain: Leucyl/phenylalanyl-tRNA--protein transferase (226 aa).

The protein belongs to the L/F-transferase family.

Its subcellular location is the cytoplasm. It carries out the reaction N-terminal L-lysyl-[protein] + L-leucyl-tRNA(Leu) = N-terminal L-leucyl-L-lysyl-[protein] + tRNA(Leu) + H(+). The catalysed reaction is N-terminal L-arginyl-[protein] + L-leucyl-tRNA(Leu) = N-terminal L-leucyl-L-arginyl-[protein] + tRNA(Leu) + H(+). The enzyme catalyses L-phenylalanyl-tRNA(Phe) + an N-terminal L-alpha-aminoacyl-[protein] = an N-terminal L-phenylalanyl-L-alpha-aminoacyl-[protein] + tRNA(Phe). Its function is as follows. Functions in the N-end rule pathway of protein degradation where it conjugates Leu, Phe and, less efficiently, Met from aminoacyl-tRNAs to the N-termini of proteins containing an N-terminal arginine or lysine. The sequence is that of Leucyl/phenylalanyl-tRNA--protein transferase from Pseudomonas aeruginosa (strain UCBPP-PA14).